A 504-amino-acid polypeptide reads, in one-letter code: ATP synthase subunit alpha (504 aa).

Gly-169–Thr-176 provides a ligand contact to ATP.

Belongs to the ATPase alpha/beta chains family. F-type ATPases have 2 components, CF(1) - the catalytic core - and CF(0) - the membrane proton channel. CF(1) has five subunits: alpha(3), beta(3), gamma(1), delta(1), epsilon(1). CF(0) has three main subunits: a(1), b(2) and c(9-12). The alpha and beta chains form an alternating ring which encloses part of the gamma chain. CF(1) is attached to CF(0) by a central stalk formed by the gamma and epsilon chains, while a peripheral stalk is formed by the delta and b chains.

It is found in the cell inner membrane. It carries out the reaction ATP + H2O + 4 H(+)(in) = ADP + phosphate + 5 H(+)(out). Functionally, produces ATP from ADP in the presence of a proton gradient across the membrane. The alpha chain is a regulatory subunit. This chain is ATP synthase subunit alpha, found in Leptospira biflexa serovar Patoc (strain Patoc 1 / Ames).